The chain runs to 400 residues: Enoyl-[acyl-carrier-protein] reductase [NADH] (400 aa).

Residues 48-53, 74-75, 111-112, and 139-140 contribute to the NAD(+) site; these read GSSSGY, FE, DA, and LA. Tyr-225 serves as a coordination point for substrate. Catalysis depends on Tyr-235, which acts as the Proton donor. NAD(+)-binding positions include Lys-244 and 273-275; that span reads VVT.

This sequence belongs to the TER reductase family. As to quaternary structure, monomer.

The enzyme catalyses a 2,3-saturated acyl-[ACP] + NAD(+) = a (2E)-enoyl-[ACP] + NADH + H(+). Its pathway is lipid metabolism; fatty acid biosynthesis. Its function is as follows. Involved in the final reduction of the elongation cycle of fatty acid synthesis (FAS II). Catalyzes the reduction of a carbon-carbon double bond in an enoyl moiety that is covalently linked to an acyl carrier protein (ACP). This chain is Enoyl-[acyl-carrier-protein] reductase [NADH], found in Aliivibrio salmonicida (strain LFI1238) (Vibrio salmonicida (strain LFI1238)).